Reading from the N-terminus, the 514-residue chain is Alpha-amylase (514 aa).

The N-terminal stretch at 1-31 (MIQKRKRTVSFRLVLMCTLLFVSLPITKTSA) is a signal peptide. The Ca(2+) site is built by N133, D190, A212, D214, D225, D231, D233, and D235. Na(+) is bound at residue D190. Residues D214, D225, and D231 each coordinate Na(+). The active-site Nucleophile is D262. H266 lines the Ca(2+) pocket. E292 serves as the catalytic Proton donor. Residues G331, D438, and D461 each contribute to the Ca(2+) site.

The protein belongs to the glycosyl hydrolase 13 family. In terms of assembly, monomer. Ca(2+) is required as a cofactor. The cofactor is Na(+).

It is found in the secreted. The enzyme catalyses Endohydrolysis of (1-&gt;4)-alpha-D-glucosidic linkages in polysaccharides containing three or more (1-&gt;4)-alpha-linked D-glucose units.. The protein is Alpha-amylase of Bacillus amyloliquefaciens (Bacillus velezensis).